A 300-amino-acid chain; its full sequence is 4-diphosphocytidyl-2-C-methyl-D-erythritol kinase (300 aa).

Lys17 is an active-site residue. 102–112 contacts ATP; the sequence is PVAAGIGGGSA. Asp144 is an active-site residue.

Belongs to the GHMP kinase family. IspE subfamily.

It carries out the reaction 4-CDP-2-C-methyl-D-erythritol + ATP = 4-CDP-2-C-methyl-D-erythritol 2-phosphate + ADP + H(+). The protein operates within isoprenoid biosynthesis; isopentenyl diphosphate biosynthesis via DXP pathway; isopentenyl diphosphate from 1-deoxy-D-xylulose 5-phosphate: step 3/6. In terms of biological role, catalyzes the phosphorylation of the position 2 hydroxy group of 4-diphosphocytidyl-2C-methyl-D-erythritol. The protein is 4-diphosphocytidyl-2-C-methyl-D-erythritol kinase of Bradyrhizobium sp. (strain ORS 278).